The following is a 423-amino-acid chain: Deferrochelatase (423 aa).

Residues 1-35 constitute a signal peptide (tat-type signal); the sequence is MQYKDENGVNEPSRRRLLKVIGALALAGSCPVAHA. 236 to 238 lines the heme b pocket; sequence GTA. Residues 236-238 and Arg296 contribute to the protoporphyrin IX site; that span reads GTA. Residues His329, 334-336, and Arg347 each bind heme b; that span reads NPR.

As to quaternary structure, homodimer. Part of a ferrous iron transporter composed of EfeU, EfeO and EfeB. However, this EfeUOB tripartite iron transporter is defective in E.coli strain K12 due to a frameshift mutation in EfeU. The cofactor is heme b. Exported by the Tat system. The position of the signal peptide cleavage has been experimentally proven. Can also be exported by the Sec system.

It is found in the periplasm. The enzyme catalyses heme b + 2 H(+) = protoporphyrin IX + Fe(2+). In terms of biological role, involved in the recovery of exogenous heme iron. Extracts iron from heme while preserving the protoporphyrin ring intact. Also displays peroxidase activity on guaiacol in vitro. This Escherichia coli (strain K12) protein is Deferrochelatase (efeB).